The chain runs to 299 residues: Probable lipid kinase YegS (299 aa).

The DAGKc domain occupies 2–133 (ANFPDSLLIL…IDMARVNDKT (132 aa)). Residues T40, 66 to 72 (GDGTINE), and T95 contribute to the ATP site. Mg(2+)-binding residues include L215, D218, and L220. E271 acts as the Proton acceptor in catalysis.

It belongs to the diacylglycerol/lipid kinase family. YegS lipid kinase subfamily. Mg(2+) serves as cofactor. Ca(2+) is required as a cofactor.

It is found in the cytoplasm. Functionally, probably phosphorylates lipids; the in vivo substrate is unknown. The chain is Probable lipid kinase YegS from Salmonella arizonae (strain ATCC BAA-731 / CDC346-86 / RSK2980).